A 271-amino-acid polypeptide reads, in one-letter code: 2-aminophenol 1,6-dioxygenase alpha subunit (271 aa).

It belongs to the LigB/MhpB extradiol dioxygenase family. Heterotetramer of 2 alpha and 2 beta subunits.

Component of the 2-aminophenol 1,6-dioxygenase complex that catalyzes the ring fission of 2-aminophenol to produce 2-aminomuconic 6-semialdehyde. AmnA seems to have a role in the stability of the complex. This Pseudomonas sp protein is 2-aminophenol 1,6-dioxygenase alpha subunit (amnA).